Reading from the N-terminus, the 429-residue chain is MRAELNQGLIDFLKASPTPFHATASLARRLEAAGYRRLDERDAWHTEAGGRYYVTRNDSSLIAIRLGRRSPLESGFRLVGAHTDSPCLRVKPNPEIARNGFLQLGVEVYGGALFAPWFDRDLSLAGRVTFRANGKLESRLVDFRKAIAVIPNLAIHLNRAANEGWPINAQNELPPIIAQLAPGEAADFRLLLDEQLLREHGITADVVLDYELSFYDTQSAAVVGLNDEFIAGARLDNLLSCHAGLEALLNAEGDENCILVCTDHEEVGSCSHCGADGPFLEQVLRRLLPEGDAFSRAIQRSLLVSADNAHGVHPNYADKHDANHGPALNGGPVIKINSNQRYATNSETAGFFRHLCQDSEVPVQSFVTRSDMGCGSTIGPITASQVGVRTVDIGLPTFAMHSIRELAGSHDLAHLVKVLGAFYASSELP.

Positions 82, 156, and 401 each coordinate Zn(2+).

Belongs to the peptidase M18 family. It depends on Zn(2+) as a cofactor.

This Pseudomonas aeruginosa (strain UCBPP-PA14) protein is Probable M18 family aminopeptidase 2.